Reading from the N-terminus, the 310-residue chain is Homoserine kinase (310 aa).

Residue 91–101 participates in ATP binding; sequence PIGSGLGSSAC.

Belongs to the GHMP kinase family. Homoserine kinase subfamily.

The protein localises to the cytoplasm. It catalyses the reaction L-homoserine + ATP = O-phospho-L-homoserine + ADP + H(+). Its pathway is amino-acid biosynthesis; L-threonine biosynthesis; L-threonine from L-aspartate: step 4/5. In terms of biological role, catalyzes the ATP-dependent phosphorylation of L-homoserine to L-homoserine phosphate. The protein is Homoserine kinase of Escherichia coli (strain SE11).